The chain runs to 137 residues: Kunitz-type trypsin inhibitor alpha chain (137 aa).

Cysteine 40 and cysteine 86 are joined by a disulfide.

This sequence belongs to the protease inhibitor I3 (leguminous Kunitz-type inhibitor) family. Heterodimer of an alpha and a beta chain linked by a disulfide bond.

Its function is as follows. Inhibition of trypsin. The protein is Kunitz-type trypsin inhibitor alpha chain of Neltuma juliflora (Mesquite).